A 607-amino-acid chain; its full sequence is MEAPAAGLFLLLLLGTWAPAPGSASSEAPPLINEDVKRTVDLSSHLAKVTAEVVLAHLGGGSTSRATSFLLALEPELEARLAHLGVQVKGEDEEENNLEVRETKIKGKSGRFFTVKLPVALDPGAKISVIVETVYTHVLHPYPTQITQSEKQFVVFEGNHYFYSPYPTKTQTMRVKLASRNVESYTKLGNPTRSEDLLDYGPFRDVPAYSQDTFKVHYENNSPFLTITSMTRVIEVSHWGNIAVEENVDLKHTGAVLKGPFSRYDYQRQPDSGISSIRSFKTILPAAAQDVYYRDEIGNVSTSHLLILDDSVEMEIRPRFPLFGGWKTHYIVGYNLPSYEYLYNLGDQYALKMRFVDHVFDEQVIDSLTVKIILPEGAKNIEIDSPYEISRAPDELHYTYLDTFGRPVIVAYKKNLVEQHIQDIVVHYTFNKVLMLQEPLLVVAAFYILFFTVIIYVRLDFSITKDPAAEARMKVACITEQVLTLVNKRIGLYRHFDETVNRYKQSRDISTLNSGKKSLETEHKALTSEIALLQSRLKTEGSDLCDRVSEMQKLDAQVKELVLKSAVEAERLVAGKLKKDTYIENEKLISGKRQELVTKIDHILDAL.

Residues 1–23 form the signal peptide; the sequence is MEAPAAGLFLLLLLGTWAPAPGS. Residues 24 to 438 are Lumenal-facing; the sequence is ASSEAPPLIN…TFNKVLMLQE (415 aa). Lys-187 carries the N6-acetyllysine modification. Asn-299 is a glycosylation site (N-linked (GlcNAc...) asparagine). A helical membrane pass occupies residues 439-457; the sequence is PLLVVAAFYILFFTVIIYV. Residues 458–607 are Cytoplasmic-facing; that stretch reads RLDFSITKDP…TKIDHILDAL (150 aa). The residue at position 538 (Lys-538) is an N6-acetyllysine; alternate. Residue Lys-538 forms a Glycyl lysine isopeptide (Lys-Gly) (interchain with G-Cter in SUMO2); alternate linkage.

The protein belongs to the OST1 family. As to quaternary structure, component of the oligosaccharyltransferase (OST) complex. OST exists in two different complex forms which contain common core subunits RPN1, RPN2, OST48, OST4, DAD1 and TMEM258, either STT3A or STT3B as catalytic subunits, and form-specific accessory subunits. STT3A complex assembly occurs through the formation of 3 subcomplexes. Subcomplex 1 contains RPN1 and TMEM258, subcomplex 2 contains the STT3A-specific subunits STT3A, DC2/OSTC, and KCP2 as well as the core subunit OST4, and subcomplex 3 contains RPN2, DAD1, and OST48. The STT3A complex can form stable complexes with the Sec61 complex or with both the Sec61 and TRAP complexes. Interacts with TMEM35A/NACHO. Ubiquitinated by the ECS(ASB11) complex. Ubiquitinated by RNF128, leading to degradation in a proteasome/lysosome-dependent manner. Post-translationally, ufmylated by UFL1 in response to endoplasmic reticulum stress, promoting reticulophagy of endoplasmic reticulum sheets. In terms of tissue distribution, expressed in all tissues tested.

The protein resides in the endoplasmic reticulum membrane. The protein localises to the melanosome. The protein operates within protein modification; protein glycosylation. Subunit of the oligosaccharyl transferase (OST) complex that catalyzes the initial transfer of a defined glycan (Glc(3)Man(9)GlcNAc(2) in eukaryotes) from the lipid carrier dolichol-pyrophosphate to an asparagine residue within an Asn-X-Ser/Thr consensus motif in nascent polypeptide chains, the first step in protein N-glycosylation. N-glycosylation occurs cotranslationally and the complex associates with the Sec61 complex at the channel-forming translocon complex that mediates protein translocation across the endoplasmic reticulum (ER). All subunits are required for a maximal enzyme activity. The sequence is that of Dolichyl-diphosphooligosaccharide--protein glycosyltransferase subunit 1 from Homo sapiens (Human).